An 86-amino-acid chain; its full sequence is Envelope glycoprotein N (86 aa).

The N-terminal stretch at 1 to 29 (MTLYKIVSKPIILLAFFFTRVVFTNEVDG) is a signal peptide. At 30 to 47 (EELFYKPTCHSDTYEIIL) the chain is on the virion surface side. Residues 48-68 (KKFSSIWILVNTFILLCSFSL) traverse the membrane as a helical segment. Residues 69-86 (FLKYWCFKTLAKETVKGY) lie on the Intravirion side of the membrane.

The protein belongs to the herpesviridae glycoprotein N family. As to quaternary structure, interacts (via N-terminus) with gM (via N-terminus). The gM-gN heterodimer forms the gCII complex.

Its subcellular location is the virion membrane. The protein localises to the host membrane. It localises to the host Golgi apparatus. It is found in the host trans-Golgi network. Functionally, envelope glycoprotein necessary for proper maturation of gM and modulation of its membrane fusion activity. Also plays a critical role in virion morphogenesis. This is Envelope glycoprotein N from Homo sapiens (Human).